Here is a 75-residue protein sequence, read N- to C-terminus: Putative sulfur carrier protein TsuB (75 aa).

Cys-13 acts as the Cysteine persulfide intermediate in catalysis.

This sequence belongs to the sulfur carrier protein TusA family.

In terms of biological role, involved in thiosulfate metabolism. The chain is Putative sulfur carrier protein TsuB from Escherichia coli (strain K12).